Consider the following 121-residue polypeptide: Small ribosomal subunit protein bS6 (121 aa).

This sequence belongs to the bacterial ribosomal protein bS6 family.

In terms of biological role, binds together with bS18 to 16S ribosomal RNA. The sequence is that of Small ribosomal subunit protein bS6 from Rickettsia conorii (strain ATCC VR-613 / Malish 7).